A 427-amino-acid chain; its full sequence is N-myc proto-oncogene protein (427 aa).

4 disordered regions span residues 45–79, 144–173, 195–255, and 297–349; these read FELL…SVGL, EKLQ…SGRA, AAEG…STNK, and APSP…RNHN. Pro residues-rich tracts occupy residues 49 to 61 and 152 to 167; these read PTPP…PAPG and AAPP…PPVP. A compositionally biased stretch (low complexity) spans 210–221; that stretch reads RASSSSSSSGDD. Acidic residues predominate over residues 222–242; the sequence is TLSDSEDDEDEEEEDEEEEID. Phosphoserine; by CK2 occurs at positions 224 and 226. Residues 343 to 396 enclose the bHLH domain; that stretch reads ERRRNHNILERQRANDLRSSFLTLRDHVLSELVQNEKAAKVVILKKATEYVHSL. The leucine-zipper stretch occupies residues 396–417; that stretch reads LQAEEQKLLLEKEKLQARQEQL.

Efficient DNA binding requires dimerization with another bHLH protein. Binds DNA as a heterodimer with MAX.

It localises to the nucleus. The sequence is that of N-myc proto-oncogene protein (MYCN) from Serinus canaria (Island canary).